Reading from the N-terminus, the 382-residue chain is MAKADYYETLGVSRTADEKELKSAFRKLAMQFHPDKNPDDNDAERKFKEINEAYETLKDPNKRAAYDRYGHAAFEHGGMGGGGFGGGGFGGGGGFSDIFEDIFGEMMGGGRGRARSSGGRERGADLRYNMEISLEEAFTGKTAQIRVPTSITCDVCSGSGAKPGTQPKTCGTCQGSGRVRAAQGFFSVERTCPTCHGRGQTIPDPCGKCHGQGRITEERSLSVNIPSGIEDGTRIRLQGEGEAGTRGGPSGDLYIFLSVKPHEFFQRDGADLYCAVPISMTTAALGGTFDVATLDGTKSRVTVPEGTQVGKQFRLKAKGMPVLRSSQVGDLYIQIQIETPQKLTKRQRELLQEFEQISSKDNNPESTGFFARMKDFFDTFSD.

A J domain is found at 5–70; that stretch reads DYYETLGVSR…NKRAAYDRYG (66 aa). A CR-type zinc finger spans residues 140–218; it reads GKTAQIRVPT…CHGQGRITEE (79 aa). Zn(2+) contacts are provided by cysteine 153, cysteine 156, cysteine 170, cysteine 173, cysteine 192, cysteine 195, cysteine 206, and cysteine 209. CXXCXGXG motif repeat units follow at residues 153-160, 170-177, 192-199, and 206-213; these read CDVCSGSG, CGTCQGSG, CPTCHGRG, and CGKCHGQG.

It belongs to the DnaJ family. As to quaternary structure, homodimer. The cofactor is Zn(2+).

The protein resides in the cytoplasm. Its function is as follows. Participates actively in the response to hyperosmotic and heat shock by preventing the aggregation of stress-denatured proteins and by disaggregating proteins, also in an autonomous, DnaK-independent fashion. Unfolded proteins bind initially to DnaJ; upon interaction with the DnaJ-bound protein, DnaK hydrolyzes its bound ATP, resulting in the formation of a stable complex. GrpE releases ADP from DnaK; ATP binding to DnaK triggers the release of the substrate protein, thus completing the reaction cycle. Several rounds of ATP-dependent interactions between DnaJ, DnaK and GrpE are required for fully efficient folding. Also involved, together with DnaK and GrpE, in the DNA replication of plasmids through activation of initiation proteins. This chain is Chaperone protein DnaJ, found in Rhizobium rhizogenes (strain K84 / ATCC BAA-868) (Agrobacterium radiobacter).